The sequence spans 309 residues: Probable 5-dehydro-4-deoxyglucarate dehydratase (309 aa).

It belongs to the DapA family.

It catalyses the reaction 5-dehydro-4-deoxy-D-glucarate + H(+) = 2,5-dioxopentanoate + CO2 + H2O. It functions in the pathway carbohydrate acid metabolism; D-glucarate degradation; 2,5-dioxopentanoate from D-glucarate: step 2/2. This chain is Probable 5-dehydro-4-deoxyglucarate dehydratase, found in Saccharopolyspora erythraea (strain ATCC 11635 / DSM 40517 / JCM 4748 / NBRC 13426 / NCIMB 8594 / NRRL 2338).